Reading from the N-terminus, the 1320-residue chain is Collagen alpha-1(XX) chain (1320 aa).

The N-terminal stretch at 1 to 25 (MSLQGSYQHFCLWMFLGTTLALGQG) is a signal peptide. A Fibronectin type-III 1 domain is found at 27–118 (VSSRLRLAVL…EFVIEDLKSQ (92 aa)). Positions 177–352 (DIIFLVDGSW…DTLAPLLSRL (176 aa)) constitute a VWFA domain. 5 Fibronectin type-III domains span residues 377–466 (TPTR…APLP), 467–556 (PPGP…SALG), 557–644 (PPRH…TQKA), 646–735 (SPGQ…TPSA), and 740–831 (PPSS…ACPA). Residue asparagine 433 is glycosylated (N-linked (GlcNAc...) asparagine). Residues asparagine 569 and asparagine 604 are each glycosylated (N-linked (GlcNAc...) asparagine). Residues 728–752 (SLRYTPSAASRSPPSSLALSSETPN) are disordered. Residues 733-748 (PSAASRSPPSSLALSS) are compositionally biased toward low complexity. N-linked (GlcNAc...) asparagine glycosylation is present at asparagine 771. In terms of domain architecture, Laminin G-like spans 840–1035 (GFDLMVAFGL…LQMLQIVCSD (196 aa)). Disordered stretches follow at residues 1064-1220 (YSSE…EKGE) and 1291-1320 (LRPE…ESLE). Positions 1069–1080 (PGPPGPQGPPGL) are enriched in pro residues. Collagen-like domains follow at residues 1069 to 1122 (PGPP…TQGR), 1125 to 1174 (QGPM…GPAG), and 1165 to 1221 (GMRG…KGEP). Low complexity predominate over residues 1081–1093 (PGRNGPPGQQGHP). Residues 1106 to 1115 (GPEGPGGQQG) are compositionally biased toward gly residues. Residues 1140–1152 (QGLSGLQGLSGQQ) show a composition bias toward low complexity. The segment covering 1302 to 1320 (ISHTSNPRLQEVQTPESLE) has biased composition (polar residues).

It is found in the secreted. The protein localises to the extracellular space. Its function is as follows. Probable collagen protein. In Mus musculus (Mouse), this protein is Collagen alpha-1(XX) chain (Col20a1).